The following is a 215-amino-acid chain: UPF0502 protein YceH (215 aa).

This sequence belongs to the UPF0502 family.

This chain is UPF0502 protein YceH, found in Salmonella arizonae (strain ATCC BAA-731 / CDC346-86 / RSK2980).